Here is a 170-residue protein sequence, read N- to C-terminus: Protein-export protein SecB (170 aa).

It belongs to the SecB family. Homotetramer, a dimer of dimers. One homotetramer interacts with 1 SecA dimer.

It localises to the cytoplasm. One of the proteins required for the normal export of preproteins out of the cell cytoplasm. It is a molecular chaperone that binds to a subset of precursor proteins, maintaining them in a translocation-competent state. It also specifically binds to its receptor SecA. This is Protein-export protein SecB from Xanthomonas campestris pv. campestris (strain 8004).